Consider the following 355-residue polypeptide: NADH-quinone oxidoreductase subunit H (355 aa).

Transmembrane regions (helical) follow at residues 25-45 (IVRILVVSVVILLCVAYLILW), 91-111 (WLYLIAPVMTVVPAFAVWAVI), 126-146 (LLYAMAISSIGVYAVILAGWA), 170-190 (MGFALVLVLMTAGSLNLSEIV), 205-225 (FLSWNWLPLLPAFVVYFISGI), 252-272 (GMAFALFFLAEYINMIVISAL), 290-310 (FIPGIFWLVLKIFALLSVFIW), and 330-350 (VFLPVTVVWVVVVGFWMMSPL).

Belongs to the complex I subunit 1 family. NDH-1 is composed of 14 different subunits. Subunits NuoA, H, J, K, L, M, N constitute the membrane sector of the complex.

Its subcellular location is the cell inner membrane. The catalysed reaction is a quinone + NADH + 5 H(+)(in) = a quinol + NAD(+) + 4 H(+)(out). NDH-1 shuttles electrons from NADH, via FMN and iron-sulfur (Fe-S) centers, to quinones in the respiratory chain. The immediate electron acceptor for the enzyme in this species is believed to be ubiquinone. Couples the redox reaction to proton translocation (for every two electrons transferred, four hydrogen ions are translocated across the cytoplasmic membrane), and thus conserves the redox energy in a proton gradient. This subunit may bind ubiquinone. The sequence is that of NADH-quinone oxidoreductase subunit H from Burkholderia lata (strain ATCC 17760 / DSM 23089 / LMG 22485 / NCIMB 9086 / R18194 / 383).